The chain runs to 100 residues: Small ribosomal subunit protein uS14c (100 aa).

This sequence belongs to the universal ribosomal protein uS14 family. Part of the 30S ribosomal subunit.

Its subcellular location is the plastid. The protein localises to the chloroplast. Binds 16S rRNA, required for the assembly of 30S particles. This is Small ribosomal subunit protein uS14c from Nymphaea alba (White water-lily).